Reading from the N-terminus, the 143-residue chain is Deoxyuridine 5'-triphosphate nucleotidohydrolase (143 aa).

Substrate contacts are provided by residues 63–65, Asn-76, 80–82, and Lys-90; these read RSG and TID.

Belongs to the dUTPase family. Mg(2+) serves as cofactor.

It catalyses the reaction dUTP + H2O = dUMP + diphosphate + H(+). Its pathway is pyrimidine metabolism; dUMP biosynthesis; dUMP from dCTP (dUTP route): step 2/2. In terms of biological role, this enzyme is involved in nucleotide metabolism: it produces dUMP, the immediate precursor of thymidine nucleotides and it decreases the intracellular concentration of dUTP so that uracil cannot be incorporated into DNA. In Finegoldia magna (strain ATCC 29328 / DSM 20472 / WAL 2508) (Peptostreptococcus magnus), this protein is Deoxyuridine 5'-triphosphate nucleotidohydrolase.